A 163-amino-acid polypeptide reads, in one-letter code: MALNLQKKEEIICKIHETATRAVSVVVATLDGIAVNEVTKLRKEARDIGVCVHVIRNTLMRKVIENTPLACLREILTGQNIVAFSMNQPRDSARIFVKFTKNHEHFKIKGAVFEGKFIPASKINLLSDLPNHKEAIFRLITIMKTSSIGSLIHILHILSNQKQ.

Belongs to the universal ribosomal protein uL10 family. In terms of assembly, part of the ribosomal stalk of the 50S ribosomal subunit. The N-terminus interacts with L11 and the large rRNA to form the base of the stalk. The C-terminus forms an elongated spine to which L12 dimers bind in a sequential fashion forming a multimeric L10(L12)X complex.

Forms part of the ribosomal stalk, playing a central role in the interaction of the ribosome with GTP-bound translation factors. The protein is Large ribosomal subunit protein uL10 of Blochmanniella pennsylvanica (strain BPEN).